Consider the following 402-residue polypeptide: Transcription regulatory protein OpdE (402 aa).

The next 12 membrane-spanning stretches (helical) occupy residues 22 to 42 (VLAI…PVSL), 60 to 80 (GIAI…SVAG), 86 to 106 (TLLL…ALAP), 108 to 128 (YFVY…FWSM), 147 to 167 (ALVN…GAWL), 170 to 190 (LIGW…ALAW), 220 to 240 (PGVM…FSLF), 256 to 276 (AHVS…TLLI), 296 to 316 (ALIA…VVLL), 318 to 338 (LWGL…ARVF), 348 to 368 (LFVA…GLLF), and 375 to 395 (ATFF…ILTA).

The protein to B.subtilis YwfA.

Its subcellular location is the cell membrane. Functionally, regulates the expression of oprD which encodes the imipenem-specific porin. The sequence is that of Transcription regulatory protein OpdE (opdE) from Pseudomonas aeruginosa (strain ATCC 15692 / DSM 22644 / CIP 104116 / JCM 14847 / LMG 12228 / 1C / PRS 101 / PAO1).